Here is a 330-residue protein sequence, read N- to C-terminus: Aspartate--ammonia ligase (330 aa).

The protein belongs to the class-II aminoacyl-tRNA synthetase family. AsnA subfamily.

It is found in the cytoplasm. The catalysed reaction is L-aspartate + NH4(+) + ATP = L-asparagine + AMP + diphosphate + H(+). It participates in amino-acid biosynthesis; L-asparagine biosynthesis; L-asparagine from L-aspartate (ammonia route): step 1/1. The chain is Aspartate--ammonia ligase from Yersinia enterocolitica serotype O:8 / biotype 1B (strain NCTC 13174 / 8081).